The chain runs to 138 residues: Large ribosomal subunit protein uL16 (138 aa).

A compositionally biased stretch (basic residues) spans 1–13; that stretch reads MLQPARRKFRKEQ. The disordered stretch occupies residues 1–22; it reads MLQPARRKFRKEQKGRNTGLAT.

The protein belongs to the universal ribosomal protein uL16 family. As to quaternary structure, part of the 50S ribosomal subunit.

In terms of biological role, binds 23S rRNA and is also seen to make contacts with the A and possibly P site tRNAs. This Thiobacillus denitrificans (strain ATCC 25259 / T1) protein is Large ribosomal subunit protein uL16.